The primary structure comprises 908 residues: Isoleucine--tRNA ligase (908 aa).

The 'HIGH' region signature appears at 59-69 (PYANGDLHIGH). Glu554 contributes to the L-isoleucyl-5'-AMP binding site. The 'KMSKS' region motif lies at 595–599 (KMSKS). Position 598 (Lys598) interacts with ATP. Zn(2+)-binding residues include Cys882, Cys885, Cys898, and Cys901.

Belongs to the class-I aminoacyl-tRNA synthetase family. IleS type 1 subfamily. Monomer. Zn(2+) is required as a cofactor.

It is found in the cytoplasm. It catalyses the reaction tRNA(Ile) + L-isoleucine + ATP = L-isoleucyl-tRNA(Ile) + AMP + diphosphate. Its function is as follows. Catalyzes the attachment of isoleucine to tRNA(Ile). As IleRS can inadvertently accommodate and process structurally similar amino acids such as valine, to avoid such errors it has two additional distinct tRNA(Ile)-dependent editing activities. One activity is designated as 'pretransfer' editing and involves the hydrolysis of activated Val-AMP. The other activity is designated 'posttransfer' editing and involves deacylation of mischarged Val-tRNA(Ile). The polypeptide is Isoleucine--tRNA ligase (Mesoplasma florum (strain ATCC 33453 / NBRC 100688 / NCTC 11704 / L1) (Acholeplasma florum)).